The following is a 1037-amino-acid chain: Tyrosine-protein kinase-like otk (1037 aa).

Residues 1-23 (MDMDVMMISMCILASTFMAPGWA) form the signal peptide. Ig-like C2-type domains lie at 24-109 (STSG…REAS), 110-199 (PPAK…RVMS), 251-365 (PEDL…APLN), 368-464 (PGLL…VSIN), and 469-559 (PKFS…VQLV). Residues 24-582 (STSGFLRVPQ…GGDGFLVTRA (559 aa)) are Extracellular-facing. 5 cysteine pairs are disulfide-bonded: Cys-47/Cys-96, Cys-138/Cys-188, Cys-276/Cys-354, Cys-399/Cys-448, and Cys-491/Cys-543. Residues Asn-336, Asn-418, Asn-430, Asn-445, Asn-513, and Asn-525 are each glycosylated (N-linked (GlcNAc...) asparagine). A helical membrane pass occupies residues 583–603 (VLITMTVALAYIVLVVGLMLW). Over 604 to 1037 (CRYRRQARKA…SKAMQSVAEK (434 aa)) the chain is Cytoplasmic. Disordered regions lie at residues 623 to 683 (AGGD…KSVY) and 720 to 777 (SAQS…KEEE). Positions 658–676 (KSNGDAQKSDDTACSQQSR) are enriched in polar residues. Ser-681 is subject to Phosphoserine. Residues 693–1031 (LSELLQIGRG…QLGSALSKAM (339 aa)) enclose the Protein kinase; inactive domain. Positions 723–734 (SDKDADTEKQHS) are enriched in basic and acidic residues. Gly residues predominate over residues 739 to 749 (GSGGSGSGSGS). Over residues 768–777 (DDIEEIKEEE) the composition is skewed to acidic residues.

Belongs to the protein kinase superfamily. Tyr protein kinase family. Insulin receptor subfamily. In terms of assembly, interacts with plexA; component of a receptor complex that mediates the repulsive signaling in response to Semaphorin ligands.

Its subcellular location is the cell membrane. In terms of biological role, acts as a calcium-dependent, homophilic cell adhesion molecule that regulates neural recognition during the development of the nervous system. Component of the repulsive Plexin signaling response to regulate motor axon guidance at the embryonic stage. Also component of a receptor complex that is required in the adult visual system to innervate the lamina layer; specific targeting of R1-R6 axons. This chain is Tyrosine-protein kinase-like otk, found in Drosophila pseudoobscura pseudoobscura (Fruit fly).